We begin with the raw amino-acid sequence, 364 residues long: MREYKIAAIPADGIGPEVIAAGLQVLEALEKRSGDFSIHTETFDWGSDYYKKNGVMMPADGLEQLKKFDAIFFGAVGAPDVPDHITLWGLRLPICQGFDQYANVRPTKVLPGITPPLRNCGPGDLDWVIVRENSEGEYSGHGGRAHKGLPEEVGTEVAIFTRVGVTRIMRYAFKLAQARPRKLLTVVTKSNAQRHGMVMWDEIAAEVSKEFPDVTWDKMLVDAMTVRMTLKPQSLDTIVATNLHADILSDLAGALAGSLGVAPTANIDPERRFPSMFEPIHGSAFDITGKGIANPVATFWTAAQMLEHLGEKDAATRLMSAVERVTEAGILTPDVGGTADTQQVTDAVCEAIAGSNILNMAAVG.

Positions 222, 246, and 250 each coordinate Mn(2+).

The protein belongs to the isocitrate and isopropylmalate dehydrogenases family. It depends on Mg(2+) as a cofactor. Mn(2+) serves as cofactor. The cofactor is K(+).

It is found in the cytoplasm. It catalyses the reaction tartrate + NAD(+) = 2-hydroxy-3-oxosuccinate + NADH + H(+). The catalysed reaction is (2R,3S)-tartrate + NAD(+) = 2-hydroxy-3-oxosuccinate + NADH + H(+). The enzyme catalyses (2R,3R)-tartrate + NAD(+) = 2-hydroxy-3-oxosuccinate + NADH + H(+). It carries out the reaction (2R,3R)-tartrate + H(+) = (R)-glycerate + CO2. It catalyses the reaction (R)-malate + NAD(+) = pyruvate + CO2 + NADH. It functions in the pathway carbohydrate acid metabolism; tartrate degradation; 2-hydroxy-3-oxosuccinate from L-tartrate: step 1/1. The protein operates within carbohydrate acid metabolism; tartrate degradation; 2-hydroxy-3-oxosuccinate from meso-tartrate: step 1/1. Its pathway is carbohydrate acid metabolism; tartrate degradation; D-glycerate from L-tartrate: step 1/1. In terms of biological role, has multiple catalytic activities. Apart from catalyzing the oxidation of (+)-tartrate to oxaloglycolate, also converts meso-tartrate to D-glycerate and catalyzes the oxidative decarboxylation of D-malate to pyruvate. The protein is Probable tartrate dehydrogenase/decarboxylase TtuC (ttuC) of Agrobacterium vitis (Rhizobium vitis).